Reading from the N-terminus, the 454-residue chain is Retinoblastoma-binding protein homolog 5 (454 aa).

WD repeat units lie at residues 23-64 (LQNA…RTFS), 65-104 (AHCLPVSCLSWSRDGRKLLTSSADNSIAMFDVLAGTLLHR), 153-192 (SSDESASCVSYDRKGKYIIAGTGKGKLLIYNAETLKCVAW), 196-235 (NTVQQIRQIIVPMKSRFIITNTQDRVIRTYELEDLLHQRG), 248-288 (VNKA…LIKI), and 292-330 (NKGEALLDVQWHPTRPIILSIAQGTVSMWTQAHVENWSA).

In terms of assembly, component of the SET2 complex (also known as the SET1/COMPASS complex), which contains at least set-2, swd-2.1, cfp-1, rbbp-5, wdr-5.1, dpy-30 and ash-2.

Its subcellular location is the nucleus. Its function is as follows. Required for di- and trimethylation at 'Lys-4' of histone H3. Regulates left/right asymmetry of ASE sensory neurons, via its role as a component of the SET2 complex. The chain is Retinoblastoma-binding protein homolog 5 (rbbp-5) from Caenorhabditis elegans.